We begin with the raw amino-acid sequence, 1014 residues long: Calcium-transporting ATPase 2, plasma membrane-type (1014 aa).

Met1 bears the N-acetylmethionine mark. The Cytoplasmic segment spans residues 1–160 (MESYLNENFD…NKFAESEMRG (160 aa)). The segment at 20–31 (VLEKWRNLCGVV) is interaction with calmodulin. Phosphoserine; by CPK1 is present on Ser45. Residues 161 to 181 (FWVFVWEALQDMTLMILGVCA) form a helical membrane-spanning segment. Residues 182 to 199 (FVSLIVGIATEGWPKGSH) lie on the Lumenal side of the membrane. Residues 200 to 220 (DGLGIAASILLVVFVTATSDY) form a helical membrane-spanning segment. Topologically, residues 221 to 348 (RQSLQFRDLD…DDETPLQVKL (128 aa)) are cytoplasmic. Residues 349–368 (NGVATIIGKIGLFFAVVTFA) form a helical membrane-spanning segment. The Lumenal segment spans residues 369 to 398 (VLVQGMFMRKLSTGTHWVWSGDEALELLEY). The helical transmembrane segment at 399–416 (FAIAVTIVVVAVPEGLPL) threads the bilayer. The Cytoplasmic portion of the chain corresponds to 417–810 (AVTLSLAFAM…KWGRSVYINI (394 aa)). The active-site 4-aspartylphosphate intermediate is Asp454. Mg(2+) is bound by residues Asp755 and Asp759. Residues 811–829 (QKFVQFQLTVNVVALVVNF) traverse the membrane as a helical segment. Residues 830 to 840 (SSACLTGSAPL) are Lumenal-facing. Residues 841 to 861 (TAVQLLWVNMIMDTLGALALA) traverse the membrane as a helical segment. The Cytoplasmic portion of the chain corresponds to 862 to 881 (TEPPNDELMKRLPVGRRGNF). The helical transmembrane segment at 882 to 904 (ITNAMWRNILGQAVYQFIVIWIL) threads the bilayer. Over 905 to 916 (QAKGKAMFGLDG) the chain is Lumenal. The chain crosses the membrane as a helical span at residues 917–938 (PDSTLMLNTLIFNCFVFCQVFN). Residues 939–956 (EISSREMEEIDVFKGILD) lie on the Cytoplasmic side of the membrane. A helical membrane pass occupies residues 957–978 (NYVFVVVIGATVFFQIIIIEFL). Residues 979–988 (GTFASTTPLT) are Lumenal-facing. The chain crosses the membrane as a helical span at residues 989 to 1010 (ITQWIFSIFIGFLGMPIAAGLK). Residues 1011–1014 (TIPV) are Cytoplasmic-facing.

This sequence belongs to the cation transport ATPase (P-type) (TC 3.A.3) family. Type IIB subfamily.

The protein localises to the endoplasmic reticulum membrane. The enzyme catalyses Ca(2+)(in) + ATP + H2O = Ca(2+)(out) + ADP + phosphate + H(+). With respect to regulation, activated by calmodulin. This magnesium-dependent enzyme catalyzes the hydrolysis of ATP coupled with the translocation of calcium from the cytosol into the endoplasmic reticulum. The polypeptide is Calcium-transporting ATPase 2, plasma membrane-type (ACA2) (Arabidopsis thaliana (Mouse-ear cress)).